Reading from the N-terminus, the 72-residue chain is uncharacterized protein (72 aa).

This is an uncharacterized protein from Escherichia coli O157:H7.